Consider the following 237-residue polypeptide: Ribonuclease 3 (237 aa).

The RNase III domain maps to 3–133 (SRQPLLDALG…LLGAIYLQHG (131 aa)). Mg(2+) is bound at residue glutamate 43. Aspartate 47 is a catalytic residue. 2 residues coordinate Mg(2+): aspartate 119 and glutamate 122. The active site involves glutamate 122. Residues 160-228 (DWKTSLQELT…AAATWKALDV (69 aa)) enclose the DRBM domain.

This sequence belongs to the ribonuclease III family. As to quaternary structure, homodimer. It depends on Mg(2+) as a cofactor.

The protein localises to the cytoplasm. It carries out the reaction Endonucleolytic cleavage to 5'-phosphomonoester.. Functionally, digests double-stranded RNA. Involved in the processing of primary rRNA transcript to yield the immediate precursors to the large and small rRNAs (23S and 16S). Processes some mRNAs, and tRNAs when they are encoded in the rRNA operon. Processes pre-crRNA and tracrRNA of type II CRISPR loci if present in the organism. This chain is Ribonuclease 3, found in Mycolicibacterium paratuberculosis (strain ATCC BAA-968 / K-10) (Mycobacterium paratuberculosis).